The sequence spans 551 residues: Glucans biosynthesis protein D (551 aa).

The segment at residues 1–32 (MDRRRFIKGSMAMAAVCGTSGIASLFSQAAFA) is a signal peptide (tat-type signal).

This sequence belongs to the OpgD/OpgG family. Predicted to be exported by the Tat system. The position of the signal peptide cleavage has not been experimentally proven.

The protein resides in the periplasm. Its pathway is glycan metabolism; osmoregulated periplasmic glucan (OPG) biosynthesis. In terms of biological role, probably involved in the control of the structural glucose backbone of osmoregulated periplasmic glucans (OPGs). This is Glucans biosynthesis protein D from Escherichia coli O1:K1 / APEC.